The following is a 265-amino-acid chain: Energy-coupling factor transporter transmembrane protein EcfT (265 aa).

5 consecutive transmembrane segments (helical) span residues 32–52 (MVLL…VFII), 72–92 (LVII…GRVI), 115–135 (LIML…IALT), 150–170 (VPAH…PTLM), and 245–265 (LAAF…RFIW).

It belongs to the energy-coupling factor EcfT family. Forms a stable energy-coupling factor (ECF) transporter complex composed of 2 membrane-embedded substrate-binding proteins (S component), 2 ATP-binding proteins (A component) and 2 transmembrane proteins (T component). May be able to interact with more than 1 S component at a time.

The protein resides in the cell membrane. In terms of biological role, transmembrane (T) component of an energy-coupling factor (ECF) ABC-transporter complex. Unlike classic ABC transporters this ECF transporter provides the energy necessary to transport a number of different substrates. This chain is Energy-coupling factor transporter transmembrane protein EcfT, found in Thermosediminibacter oceani (strain ATCC BAA-1034 / DSM 16646 / JW/IW-1228P).